A 354-amino-acid chain; its full sequence is Ornithine carbamoyltransferase, catabolic (354 aa).

Carbamoyl phosphate is bound by residues 67 to 70 (STRT), Gln94, Arg118, and 145 to 148 (HPTQ). L-ornithine-binding positions include Asn177, Asp241, and 245-246 (SM). Carbamoyl phosphate is bound by residues 284-285 (CL) and Arg329.

Belongs to the aspartate/ornithine carbamoyltransferase superfamily. OTCase family.

Its subcellular location is the cytoplasm. The enzyme catalyses carbamoyl phosphate + L-ornithine = L-citrulline + phosphate + H(+). The protein operates within amino-acid degradation; L-arginine degradation via ADI pathway; carbamoyl phosphate from L-arginine: step 2/2. Functionally, reversibly catalyzes the transfer of the carbamoyl group from carbamoyl phosphate (CP) to the N(epsilon) atom of ornithine (ORN) to produce L-citrulline. The protein is Ornithine carbamoyltransferase, catabolic (arcB) of Lactococcus lactis subsp. cremoris (strain MG1363).